Consider the following 204-residue polypeptide: Anthranilate synthase component 2 (204 aa).

Positions 13-204 (RVLVVDNYDS…KNFLEDPWTR (192 aa)) constitute a Glutamine amidotransferase type-1 domain. L-glutamine is bound at residue 64–66 (GPC). Cys91 (nucleophile; for GATase activity) is an active-site residue. L-glutamine-binding positions include Gln95 and 141 to 142 (SL). Active-site for GATase activity residues include His181 and Glu183.

In terms of assembly, heterotetramer consisting of two non-identical subunits: a beta subunit (TrpG) and a large alpha subunit (TrpE).

It catalyses the reaction chorismate + L-glutamine = anthranilate + pyruvate + L-glutamate + H(+). The protein operates within amino-acid biosynthesis; L-tryptophan biosynthesis; L-tryptophan from chorismate: step 1/5. Functionally, part of a heterotetrameric complex that catalyzes the two-step biosynthesis of anthranilate, an intermediate in the biosynthesis of L-tryptophan. In the first step, the glutamine-binding beta subunit (TrpG) of anthranilate synthase (AS) provides the glutamine amidotransferase activity which generates ammonia as a substrate that, along with chorismate, is used in the second step, catalyzed by the large alpha subunit of AS (TrpE) to produce anthranilate. In the absence of TrpG, TrpE can synthesize anthranilate directly from chorismate and high concentrations of ammonia. This is Anthranilate synthase component 2 (trpG) from Thermus thermophilus (strain ATCC 27634 / DSM 579 / HB8).